A 181-amino-acid chain; its full sequence is Photosystem I assembly protein Ycf4 (181 aa).

2 helical membrane-spanning segments follow: residues 19–39 and 61–81; these read YFWA…GISS and IVMM…MATL.

The protein belongs to the Ycf4 family.

The protein localises to the plastid. It is found in the chloroplast thylakoid membrane. Its function is as follows. Seems to be required for the assembly of the photosystem I complex. The chain is Photosystem I assembly protein Ycf4 from Thalassiosira pseudonana (Marine diatom).